Reading from the N-terminus, the 568-residue chain is bZIP transcription factor 60 (568 aa).

Composition is skewed to low complexity over residues 1–13 (MAEPDLLAPFADL) and 60–78 (TTSSSSSAAGSPEAGTSSA). Disordered stretches follow at residues 1-29 (MAEPDLLAPFADLPFPPGDDFPDFPTLGD) and 45-134 (DFDV…RKKQ). Residues 1 to 240 (MAEPDLLAPF…PAKKARKTKK (240 aa)) lie on the Cytoplasmic side of the membrane. Over residues 103–113 (GGKDGKDDEAK) the composition is skewed to basic and acidic residues. In terms of domain architecture, bZIP spans 111–171 (EAKRRARLVR…AENAALKQQL (61 aa)). The tract at residues 113 to 144 (KRRARLVRNRESAHQSRQRKKQYVEELEGKVK) is basic motif. Positions 150-157 (IADLTARI) are leucine-zipper. The chain crosses the membrane as a helical span at residues 241-261 (VAGVSLLGLLFLMMVCGCLVP). Topologically, residues 262–568 (AVNRMYGAAY…LPFKSHSPHL (307 aa)) are lumenal. N-linked (GlcNAc...) asparagine glycosylation is found at asparagine 307, asparagine 452, asparagine 456, asparagine 488, and asparagine 499. The interval 479–510 (AIPLRGSTSNDTDHFKAPPKNHSQSHAGRKPV) is disordered.

Belongs to the bZIP family.

The protein localises to the endoplasmic reticulum membrane. It is found in the nucleus. Functionally, transcription factor involved in endoplasmic reticulum (ER) stress response. Acts as a ER stress sensor and activates the transcription factor BZIP50 and the chaperone BIP1. The protein is bZIP transcription factor 60 of Oryza sativa subsp. japonica (Rice).